Consider the following 553-residue polypeptide: Dihydroxy-acid dehydratase (553 aa).

Aspartate 78 contacts Mg(2+). Position 119 (cysteine 119) interacts with [2Fe-2S] cluster. Mg(2+)-binding residues include aspartate 120 and lysine 121. At lysine 121 the chain carries N6-carboxylysine. Cysteine 193 lines the [2Fe-2S] cluster pocket. Position 441 (glutamate 441) interacts with Mg(2+). The active-site Proton acceptor is serine 467.

The protein belongs to the IlvD/Edd family. As to quaternary structure, homodimer. [2Fe-2S] cluster serves as cofactor. It depends on Mg(2+) as a cofactor.

The catalysed reaction is (2R)-2,3-dihydroxy-3-methylbutanoate = 3-methyl-2-oxobutanoate + H2O. The enzyme catalyses (2R,3R)-2,3-dihydroxy-3-methylpentanoate = (S)-3-methyl-2-oxopentanoate + H2O. It participates in amino-acid biosynthesis; L-isoleucine biosynthesis; L-isoleucine from 2-oxobutanoate: step 3/4. Its pathway is amino-acid biosynthesis; L-valine biosynthesis; L-valine from pyruvate: step 3/4. Functions in the biosynthesis of branched-chain amino acids. Catalyzes the dehydration of (2R,3R)-2,3-dihydroxy-3-methylpentanoate (2,3-dihydroxy-3-methylvalerate) into 2-oxo-3-methylpentanoate (2-oxo-3-methylvalerate) and of (2R)-2,3-dihydroxy-3-methylbutanoate (2,3-dihydroxyisovalerate) into 2-oxo-3-methylbutanoate (2-oxoisovalerate), the penultimate precursor to L-isoleucine and L-valine, respectively. This Trichlorobacter lovleyi (strain ATCC BAA-1151 / DSM 17278 / SZ) (Geobacter lovleyi) protein is Dihydroxy-acid dehydratase.